Consider the following 635-residue polypeptide: Cerevisin (635 aa).

The N-terminal stretch at 1–19 (MKLENTLFTLGALGSISAA) is a signal peptide. Residues 20–280 (LVIPNLENAA…VERDSIVEAT (261 aa)) constitute a propeptide that is removed on maturation. Composition is skewed to basic and acidic residues over residues 35–50 (INKE…VEFT), 74–85 (KGQDKESPEFNG), 94–109 (SAHE…HESS), and 126–136 (GCHENKVEEKK). Residues 35–155 (INKEDHHERP…KHHEKTLEKG (121 aa)) form a disordered region. A compositionally biased stretch (basic residues) spans 137–155 (MKGKKVKGKKHHEKTLEKG). In terms of domain architecture, Inhibitor I9 spans 182–278 (RYIIVFKRGA…DFVERDSIVE (97 aa)). The Peptidase S8 domain occupies 289 to 614 (PWGLARISHR…KQELNMDEFI (326 aa)). Catalysis depends on charge relay system residues D325 and H357. Cysteines 460 and 491 form a disulfide. Catalysis depends on S519, which acts as the Charge relay system. Positions 575–635 (DTPNVLIYNG…RDILDKLNII (61 aa)) are excised as a propeptide. N594 carries an N-linked (GlcNAc...) asparagine glycan.

It belongs to the peptidase S8 family. Post-translationally, activated by N- and C-terminal proteolytic cleavage. Protease B (PrB/PRB1) processing requires at least 4 cleavages. First, the signal peptide is removed from the 76 kDa preproprotease B by signal peptidase in the ER. Then, PrB removes its own Pro-region (in trans) at the N-terminus, producing a 39 kDa form before exiting the ER. In the Golgi complex, the C-terminal Post-region of the 40 kDa proprotease B undergoes protease A (PrA/PEP4)-mediated processing to a 37 kDa intermediate, which in turn is quickly processed again by PrB in trans to yield the 31 kDa mature PrB. In terms of processing, glycosylated. Preproprotease B is a 76 kDa unglycosylated precursor that enters the endoplasmic reticulum (ER), where it receives one Asn-linked and an undetermined number of non-Asn-linked carbohydrate side chains. In the Golgi complex, the 39 kDa form becomes 40 kDa, due to elaboration of the Asn-linked side chain. The ultimate processing step removes a peptide containing the Asn-linked chain. Mature PrB has only non-Asn-linked carbohydrates.

Its subcellular location is the vacuole. The enzyme catalyses Hydrolysis of proteins with broad specificity, and of Bz-Arg-OEt &gt; Ac-Tyr-OEt. Does not hydrolyze peptide amides.. Its function is as follows. Vacuolar proteinase B involved in protein degradation in the vacuole. Among other substrates, acts on carboxypeptidase Y (cpY/PRC1) to activate it by processing its Pro-peptide. Required for meiosis and spore formation, and for optimal survival in stationary phase. This is Cerevisin (PRB1) from Saccharomyces cerevisiae (strain ATCC 204508 / S288c) (Baker's yeast).